Here is a 420-residue protein sequence, read N- to C-terminus: Phosphoglycerate kinase (420 aa).

Residues valine 24, aspartate 25, phenylalanine 26, asparagine 27, arginine 40, serine 63, histidine 64, glycine 66, arginine 67, leucine 122, arginine 123, histidine 170, and arginine 171 each contribute to the (2R)-3-phosphoglycerate site. ADP is bound at residue glycine 214. Glycine 214 is a binding site for CDP. Residues alanine 215 and lysine 216 each coordinate AMP. Alanine 215 contacts ATP. Alanine 215 contributes to the Mg(2+) binding site. Aspartate 219 contacts CDP. Aspartate 219 serves as a coordination point for Mg(2+). Lysine 220 is an AMP binding site. Lysine 220 contacts ATP. Glycine 238 serves as a coordination point for ADP. Glycine 238 contacts CDP. AMP contacts are provided by glycine 239 and glycine 313. ATP contacts are provided by glycine 239 and glycine 313. Positions 338 and 343 each coordinate CDP. Phenylalanine 343 lines the ADP pocket. AMP is bound at residue glutamate 344. The ATP site is built by glutamate 344, aspartate 375, and threonine 376. Aspartate 375 serves as a coordination point for Mg(2+).

It belongs to the phosphoglycerate kinase family. Monomer. It depends on Mg(2+) as a cofactor.

It carries out the reaction (2R)-3-phosphoglycerate + ATP = (2R)-3-phospho-glyceroyl phosphate + ADP. It participates in carbohydrate degradation; glycolysis; pyruvate from D-glyceraldehyde 3-phosphate: step 2/5. This chain is Phosphoglycerate kinase (PGK), found in Tetrahymena thermophila.